Consider the following 139-residue polypeptide: Classical arabinogalactan protein 3 (139 aa).

The N-terminal stretch at 1 to 21 (MALKTLQALIFLGLFAASCLA) is a signal peptide. Position 22 is a pyrrolidone carboxylic acid (Q22). The segment at 30 to 115 (TFLPPVESPS…PAPRADGPVA (86 aa)) is disordered. 2 stretches are compositionally biased toward pro residues: residues 46–77 (AEPP…PPTT) and 97–107 (PSGPTPAPAPA). The GPI-anchor amidated aspartate moiety is linked to residue D116. The propeptide at 117 to 139 (SALTNKAFLVSTVIAGALYAVLA) is removed in mature form.

The protein belongs to the classical AGP family. In terms of processing, O-glycosylated on the hydroxyproline residues. Expressed at a low level in roots.

Its subcellular location is the cell membrane. In terms of biological role, proteoglycan that seems to be implicated in diverse developmental roles such as differentiation, cell-cell recognition, embryogenesis and programmed cell death. The polypeptide is Classical arabinogalactan protein 3 (AGP3) (Arabidopsis thaliana (Mouse-ear cress)).